The following is a 360-amino-acid chain: 3-isopropylmalate dehydrogenase (360 aa).

76–89 (GPKWEPLDYSLRPE) is an NAD(+) binding site. Substrate contacts are provided by R96, R106, R134, and D224. Positions 224, 248, and 252 each coordinate Mg(2+). 282–294 (GSAPDIAGRGIAN) provides a ligand contact to NAD(+).

The protein belongs to the isocitrate and isopropylmalate dehydrogenases family. LeuB type 1 subfamily. As to quaternary structure, homodimer. The cofactor is Mg(2+). Requires Mn(2+) as cofactor.

The protein resides in the cytoplasm. The catalysed reaction is (2R,3S)-3-isopropylmalate + NAD(+) = 4-methyl-2-oxopentanoate + CO2 + NADH. The protein operates within amino-acid biosynthesis; L-leucine biosynthesis; L-leucine from 3-methyl-2-oxobutanoate: step 3/4. In terms of biological role, catalyzes the oxidation of 3-carboxy-2-hydroxy-4-methylpentanoate (3-isopropylmalate) to 3-carboxy-4-methyl-2-oxopentanoate. The product decarboxylates to 4-methyl-2 oxopentanoate. This is 3-isopropylmalate dehydrogenase from Methylococcus capsulatus (strain ATCC 33009 / NCIMB 11132 / Bath).